Reading from the N-terminus, the 242-residue chain is Ferritin, mitochondrial (242 aa).

A mitochondrion-targeting transit peptide spans Met-1–Leu-49. The span at Arg-47 to Pro-58 shows a compositional bias: low complexity. The segment at Arg-47–Asn-71 is disordered. The 150-residue stretch at Gln-70–Gly-219 folds into the Ferritin-like diiron domain. The Fe cation site is built by Glu-87, Glu-122, His-125, Glu-167, and Gln-201.

The protein belongs to the ferritin family. In terms of assembly, homooligomer of 24 subunits. The functional molecule is roughly spherical and contains a central cavity into which the polymeric mineral iron core is deposited. In terms of tissue distribution, detected in testis and erythroleukemia. Expression is very low or not detectable in brain, colon, heart, kidney, liver, lung, muscle, placental, spleen and small intestine.

It localises to the mitochondrion. It catalyses the reaction 4 Fe(2+) + O2 + 4 H(+) = 4 Fe(3+) + 2 H2O. Functionally, catalyzes the oxidation of ferrous iron(II) to ferric iron(III) and stores iron in a soluble, non-toxic, readily available form. Important for iron homeostasis. Iron is taken up in the ferrous form and deposited as ferric hydroxides after oxidation. In Homo sapiens (Human), this protein is Ferritin, mitochondrial.